We begin with the raw amino-acid sequence, 121 residues long: Large ribosomal subunit protein bL17 (121 aa).

This sequence belongs to the bacterial ribosomal protein bL17 family. Part of the 50S ribosomal subunit. Contacts protein L32.

This chain is Large ribosomal subunit protein bL17, found in Rubrobacter xylanophilus (strain DSM 9941 / JCM 11954 / NBRC 16129 / PRD-1).